Reading from the N-terminus, the 325-residue chain is uncharacterized protein (325 aa).

The chain crosses the membrane as a helical span at residues 10–30 (IVFVSLAALVLLVSVSVFIYH). Residues 94-166 (KIAVVDRAGY…EIKAIIAMDI (73 aa)) form the AB hydrolase-1 domain.

Its subcellular location is the cell membrane. This is an uncharacterized protein from Bacillus subtilis (strain 168).